A 36-amino-acid polypeptide reads, in one-letter code: Photosystem II reaction center protein M (36 aa).

Residues 5–25 (ILGLIATALFIIIPTSFLLIL) traverse the membrane as a helical segment.

It belongs to the PsbM family. As to quaternary structure, PSII is composed of 1 copy each of membrane proteins PsbA, PsbB, PsbC, PsbD, PsbE, PsbF, PsbH, PsbI, PsbJ, PsbK, PsbL, PsbM, PsbT, PsbX, PsbY, PsbZ, Psb30/Ycf12, at least 3 peripheral proteins of the oxygen-evolving complex and a large number of cofactors. It forms dimeric complexes.

The protein resides in the plastid. Its subcellular location is the chloroplast thylakoid membrane. One of the components of the core complex of photosystem II (PSII). PSII is a light-driven water:plastoquinone oxidoreductase that uses light energy to abstract electrons from H(2)O, generating O(2) and a proton gradient subsequently used for ATP formation. It consists of a core antenna complex that captures photons, and an electron transfer chain that converts photonic excitation into a charge separation. This subunit is found at the monomer-monomer interface. The chain is Photosystem II reaction center protein M from Chlorokybus atmophyticus (Soil alga).